We begin with the raw amino-acid sequence, 2531 residues long: Talin (2531 aa).

In terms of domain architecture, FERM spans 87–401 (RPLRVRMMDE…GYIDIILKKK (315 aa)). The interaction with VIN1 stretch occupies residues 598–621 (GEKLLEAARGLAGAVRHLLKSAEP). Positions 2287–2526 (TDWVDPSDPN…KIRHDKYKRH (240 aa)) constitute an I/LWEQ domain. Positions 2466 to 2485 (AAKRSSEEGDDEEVSGGGQE) are disordered.

In terms of assembly, interacts with VIN1 (vinculin); the interaction facilitates VIN1 binding to F-actin.

It is found in the cytoplasm. The protein resides in the cytoskeleton. The protein localises to the cell cortex. Probably involved in connections of major cytoskeletal structures to the plasma membrane. This Oscarella pearsei (Sponge) protein is Talin.